A 198-amino-acid polypeptide reads, in one-letter code: Single-stranded DNA cytosine deaminase (198 aa).

The short motif at 1–30 is the Bipartite nuclear localization signal element; it reads MDSLLMKQKKFLYHFKNVRWAKGRHETYLC. The segment at 2–26 is interaction with SUPT6H; that stretch reads DSLLMKQKKFLYHFKNVRWAKGRHE. In terms of domain architecture, CMP/dCMP-type deaminase spans 23 to 129; sequence GRHETYLCYV…KAEPEGLRRL (107 aa). Thr-27 carries the post-translational modification Phosphothreonine; by PKA. Residue Ser-38 is modified to Phosphoserine; by PKA. The segment at 39–42 is important for interaction with CTNNBL1; sequence ATSC. His-56 is a binding site for Zn(2+). The active-site Proton donor is the Glu-58. 2 residues coordinate Zn(2+): Cys-87 and Cys-90. Residues 88 to 116 form a required for interaction with RNF126 region; that stretch reads YDCARHVAEFLRWNPNLSLRIFTARLYFC. The Nuclear export signal signature appears at 183–198; the sequence is LYEVDDLRDAFRMLGF.

It belongs to the cytidine and deoxycytidylate deaminase family. As to quaternary structure, interacts with CTNNBL1; the interaction is important for the immunoglobulin switch activity of AICDA. Interacts (via its NLS) with KPNA1. Interacts with PKA/PRKACA and PRKAR1A/PKR1. Interacts with SUPT6H, TRIM28 and NCL. Directly interacts with MCM3AP/GANP; this interaction may favor AICDA recruitment to immunoglobulin variable region genes, hence promoting somatic hypermutations. Zn(2+) is required as a cofactor. In terms of processing, ser-38 is the major site whereas Thr-27 is the minor site of phosphorylation. Phosphorylation regulates its class-switch recombination activity. Probably monoubiquitinated on several residues by RNF126. In terms of tissue distribution, expressed in germinal center B-cells (at protein level).

The protein localises to the nucleus. It localises to the cytoplasm. It catalyses the reaction a 2'-deoxycytidine in single-stranded DNA + H2O + H(+) = a 2'-deoxyuridine in single-stranded DNA + NH4(+). Single-stranded DNA-specific cytidine deaminase. Involved in somatic hypermutation (SHM), gene conversion, and class-switch recombination (CSR) in B-lymphocytes by deaminating C to U during transcription of Ig-variable (V) and Ig-switch (S) region DNA. Required for several crucial steps of B-cell terminal differentiation necessary for efficient antibody responses. May also play a role in the epigenetic regulation of gene expression by participating in DNA demethylation. This chain is Single-stranded DNA cytosine deaminase (Aicda), found in Mus musculus (Mouse).